A 395-amino-acid polypeptide reads, in one-letter code: MAVSTIYSTQALNSTHFLTSSSSSKQVFLYRRQPQTNRRFNTLITCAQETIVIGLAADSGCGKSTFMRRLTSVFGGAAKPPKGGNPDSNTLISDTTTVICLDDYHSLDRYGRKEQKVTALDPRANDFDLMYEQVKALKNGIAVEKPIYNHVTGLLDPPELIQPPKILVIEGLHPMFDERVRDLLDFSIYLDISNEVKFAWKIQRDMAERGHSLESIKASIEARKPDFDAFIDPQKQYADAVIEVLPTTLIPDDNEGKVLRVRLIMKEGVKYFSPVYLFDEGSTISWIPCGRKLTCSYPGIKFNYEPDSYFDHEVSVLEMDGQFDRLDELIYVESHLSNLSTKFYGEVTQQMLKHADFPGSNNGTGLFQTIVGLKIRDLYEQLIANKATARAEAKA.

The transit peptide at 1–46 (MAVSTIYSTQALNSTHFLTSSSSSKQVFLYRRQPQTNRRFNTLITC) directs the protein to the chloroplast. C61 and C100 form a disulfide bridge.

Belongs to the phosphoribulokinase family.

The protein resides in the plastid. It localises to the chloroplast. It catalyses the reaction D-ribulose 5-phosphate + ATP = D-ribulose 1,5-bisphosphate + ADP + H(+). The protein operates within carbohydrate biosynthesis; Calvin cycle. Its activity is regulated as follows. Light regulated via thioredoxin by reversible oxidation/reduction of sulfhydryl/disulfide groups. The protein is Phosphoribulokinase, chloroplastic of Arabidopsis thaliana (Mouse-ear cress).